The primary structure comprises 211 residues: Endo-1,4-beta-xylanase 5 (211 aa).

An N-terminal signal peptide occupies residues 1-16 (MKVTAAFASLLLTAFA). Positions 19-210 (APEPVLVSRS…GVGSASVTIS (192 aa)) constitute a GH11 domain. The active-site Nucleophile is the Glu-106. The active-site Proton donor is Glu-197.

Belongs to the glycosyl hydrolase 11 (cellulase G) family.

The protein localises to the secreted. It carries out the reaction Endohydrolysis of (1-&gt;4)-beta-D-xylosidic linkages in xylans.. Its pathway is glycan degradation; xylan degradation. Its function is as follows. Endo-1,4-beta-xylanase involved in the hydrolysis of xylan, a major structural heterogeneous polysaccharide found in plant biomass representing the second most abundant polysaccharide in the biosphere, after cellulose. In Aspergillus niger, this protein is Endo-1,4-beta-xylanase 5 (XYN5).